The chain runs to 441 residues: Fibroleukin (441 aa).

The first 15 residues, 1 to 15 (MKLANWCWLSSTVLA), serve as a signal peptide directing secretion. Asn-25 is a glycosylation site (N-linked (GlcNAc...) asparagine). Positions 73–167 (SRIEEVFKEV…LEKLNLVNMN (95 aa)) form a coiled coil. Residues 102-128 (QADDSRDPGRNGLLLPGTGAPGETGDN) form a disordered region. N-linked (GlcNAc...) asparagine glycans are attached at residues Asn-179, Asn-237, Asn-265, and Asn-338. In terms of domain architecture, Fibrinogen C-terminal spans 206–438 (VQQHLIYKDC…EVKMMIRPKH (233 aa)).

In terms of assembly, homotetramer; disulfide-linked.

The protein localises to the secreted. Its function is as follows. May play a role in physiologic lymphocyte functions at mucosal sites. This chain is Fibroleukin (FGL2), found in Bos taurus (Bovine).